The chain runs to 57 residues: NADH dehydrogenase [ubiquinone] 1 beta subcomplex subunit 1 (57 aa).

A helical transmembrane segment spans residues 10–26 (HWVHILVPAGFVFGCYL).

Belongs to the complex I NDUFB1 subunit family. Complex I is composed of 45 different subunits.

It is found in the mitochondrion inner membrane. In terms of biological role, accessory subunit of the mitochondrial membrane respiratory chain NADH dehydrogenase (Complex I) that is believed not to be involved in catalysis. Complex I functions in the transfer of electrons from NADH to the respiratory chain. The immediate electron acceptor for the enzyme is believed to be ubiquinone. The chain is NADH dehydrogenase [ubiquinone] 1 beta subcomplex subunit 1 (Ndufb1) from Mus musculus (Mouse).